The sequence spans 227 residues: Testis-expressed protein 30 (227 aa).

This Homo sapiens (Human) protein is Testis-expressed protein 30 (TEX30).